A 554-amino-acid polypeptide reads, in one-letter code: Asparagine synthetase B [glutamine-hydrolyzing] (554 aa).

Cysteine 2 acts as the For GATase activity in catalysis. A Glutamine amidotransferase type-2 domain is found at 2-186 (CSIFGVFDIK…AGSYLWSQDG (185 aa)). Residues 50 to 54 (RLSIV), 75 to 77 (NGE), and aspartate 99 contribute to the L-glutamine site. Residues leucine 233, valine 273, and 347–348 (SG) each bind ATP.

Belongs to the asparagine synthetase family. Homodimer.

It catalyses the reaction L-aspartate + L-glutamine + ATP + H2O = L-asparagine + L-glutamate + AMP + diphosphate + H(+). Its pathway is amino-acid biosynthesis; L-asparagine biosynthesis; L-asparagine from L-aspartate (L-Gln route): step 1/1. With respect to regulation, glutamine-dependent asparagine synthesis activity can be inhibited by aspartic acid analogs (such as a sulfinate derivative and (2S,3R)-2-amino-3-methylsuccinate) in vitro; the inhibition is competitive with respect to aspartate. Catalyzes the ATP-dependent conversion of aspartate into asparagine, using glutamine as a source of nitrogen. Can also use ammonia as the nitrogen source in vitro, albeit with lower efficiency. As nucleotide substrates, ATP and dATP are utilized at a similar rate in both the glutamine- and ammonia-dependent reactions, whereas GTP utilization is only 15% that of ATP, and CTP, UTP, ITP and XTP are very poor or not substrates. Also exhibits glutaminase activity. This Escherichia coli (strain K12) protein is Asparagine synthetase B [glutamine-hydrolyzing] (asnB).